The primary structure comprises 250 residues: AA9 family lytic polysaccharide monooxygenase E (250 aa).

An N-terminal signal peptide occupies residues 1–21 (MAMSKIMSLTGLLASASLVAG). Positions 22 and 107 each coordinate Cu(2+). 2 cysteine pairs are disulfide-bonded: C77-C199 and C118-C122. Residue N159 is glycosylated (N-linked (GlcNAc...) asparagine). O2 is bound by residues H185 and Q194. A Cu(2+)-binding site is contributed by Y196.

This sequence belongs to the polysaccharide monooxygenase AA9 family. Cu(2+) serves as cofactor.

The protein localises to the secreted. The catalysed reaction is [(1-&gt;4)-beta-D-glucosyl]n+m + reduced acceptor + O2 = 4-dehydro-beta-D-glucosyl-[(1-&gt;4)-beta-D-glucosyl]n-1 + [(1-&gt;4)-beta-D-glucosyl]m + acceptor + H2O.. Its function is as follows. Lytic polysaccharide monooxygenase (LPMO) that depolymerizes crystalline and amorphous polysaccharides via the oxidation of scissile alpha- or beta-(1-4)-glycosidic bonds, yielding C1 or C4 oxidation products. Catalysis by LPMOs requires the reduction of the active-site copper from Cu(II) to Cu(I) by a reducing agent and H(2)O(2) or O(2) as a cosubstrate. This is AA9 family lytic polysaccharide monooxygenase E from Aspergillus tamarii.